The primary structure comprises 275 residues: Bis(5'-nucleosyl)-tetraphosphatase, symmetrical (275 aa).

Belongs to the Ap4A hydrolase family.

The catalysed reaction is P(1),P(4)-bis(5'-adenosyl) tetraphosphate + H2O = 2 ADP + 2 H(+). In terms of biological role, hydrolyzes diadenosine 5',5'''-P1,P4-tetraphosphate to yield ADP. This Stutzerimonas stutzeri (strain A1501) (Pseudomonas stutzeri) protein is Bis(5'-nucleosyl)-tetraphosphatase, symmetrical.